Here is a 537-residue protein sequence, read N- to C-terminus: Tyrosine-protein kinase Fyn (537 aa).

Glycine 2 is lipidated: N-myristoyl glycine. S-palmitoyl cysteine attachment occurs at residues cysteine 3 and cysteine 6. Threonine 12 carries the phosphothreonine; by PKC modification. A phosphoserine mark is found at serine 21 and serine 26. The SH3 domain maps to 82–143 (TGVTLFVALY…PSNYVAPVDS (62 aa)). In terms of domain architecture, SH2 spans 149–246 (WYFGKLGRKD…GLCCRLVVPC (98 aa)). Tyrosine 185 is modified (phosphotyrosine). The Protein kinase domain occupies 271–524 (LQLIKRLGNG…YLQGFLEDYF (254 aa)). ATP-binding positions include 277-285 (LGNGQFGEV) and lysine 299. Residue aspartate 390 is the Proton acceptor of the active site. At tyrosine 420 the chain carries Phosphotyrosine; by autocatalysis. A Phosphotyrosine; by CSK modification is found at tyrosine 531.

It belongs to the protein kinase superfamily. Tyr protein kinase family. SRC subfamily. As to quaternary structure, interacts (via its SH3 domain) with PIK3R1 and PRMT8. Interacts with FYB1, PAG1, and SH2D1A. Interacts with CD79A (tyrosine-phosphorylated form); the interaction increases FYN activity. Interacts (via SH2 domain) with CSF1R (tyrosine phosphorylated). Interacts with TOM1L1 (phosphorylated form). Interacts with KDR (tyrosine phosphorylated). Interacts (via SH3 domain) with KLHL2 (via N-terminus). Interacts with SH2D1A and SLAMF1. Interacts with ITCH; the interaction phosphorylates ITCH and negatively regulates its activity. Interacts with FASLG. Interacts with RUNX3. Interacts with KIT. Interacts with EPHA8; possible downstream effector of EPHA8 in regulation of cell adhesion. Interacts with PTK2/FAK1; this interaction leads to PTK2/FAK1 phosphorylation and activation. Interacts with CAV1; this interaction couples integrins to the Ras-ERK pathway. Interacts with UNC119. Interacts (via SH2 domain) with PTPRH (phosphorylated form). Interacts with PTPRO (phosphorylated form). Interacts with PTPRB (phosphorylated form). Interacts with FYB2. Interacts with DSCAM. Interacts with SKAP1 and FYB1; this interaction promotes the phosphorylation of CLNK. Interacts with NEDD9; in the presence of PTK2. The cofactor is Mn(2+). Autophosphorylated at Tyr-420. Phosphorylation on the C-terminal tail at Tyr-531 by CSK maintains the enzyme in an inactive state. PTPRC/CD45 dephosphorylates Tyr-531 leading to activation. Ultraviolet B (UVB) strongly increase phosphorylation at Thr-12 and kinase activity, and promotes translocation from the cytoplasm to the nucleus. Dephosphorylation at Tyr-420 by PTPN2 negatively regulates T-cell receptor signaling. Phosphorylated at tyrosine residues, which can be enhanced by NTN1. Post-translationally, palmitoylated. Palmitoylation at Cys-3 and Cys-6, probably by ZDHHC21, regulates subcellular location.

It localises to the cytoplasm. It is found in the nucleus. Its subcellular location is the cell membrane. The protein resides in the perikaryon. The catalysed reaction is L-tyrosyl-[protein] + ATP = O-phospho-L-tyrosyl-[protein] + ADP + H(+). Inhibited by phosphorylation of Tyr-531 by leukocyte common antigen and activated by dephosphorylation of this site. Functionally, non-receptor tyrosine-protein kinase that plays a role in many biological processes including regulation of cell growth and survival, cell adhesion, integrin-mediated signaling, cytoskeletal remodeling, cell motility, immune response and axon guidance. Inactive FYN is phosphorylated on its C-terminal tail within the catalytic domain. Following activation by PKA, the protein subsequently associates with PTK2/FAK1, allowing PTK2/FAK1 phosphorylation, activation and targeting to focal adhesions. Involved in the regulation of cell adhesion and motility through phosphorylation of CTNNB1 (beta-catenin) and CTNND1 (delta-catenin). Regulates cytoskeletal remodeling by phosphorylating several proteins including the actin regulator WAS and the microtubule-associated proteins MAP2 and MAPT. Promotes cell survival by phosphorylating AGAP2/PIKE-A and preventing its apoptotic cleavage. Participates in signal transduction pathways that regulate the integrity of the glomerular slit diaphragm (an essential part of the glomerular filter of the kidney) by phosphorylating several slit diaphragm components including NPHS1, KIRREL1 and TRPC6. Plays a role in neural processes by phosphorylating DPYSL2, a multifunctional adapter protein within the central nervous system, ARHGAP32, a regulator for Rho family GTPases implicated in various neural functions, and SNCA, a small pre-synaptic protein. Involved in reelin signaling by mediating phosphorylation of DAB1 following reelin (RELN)-binding to its receptor. Participates in the downstream signaling pathways that lead to T-cell differentiation and proliferation following T-cell receptor (TCR) stimulation. Phosphorylates PTK2B/PYK2 in response to T-cell receptor activation. Also participates in negative feedback regulation of TCR signaling through phosphorylation of PAG1, thereby promoting interaction between PAG1 and CSK and recruitment of CSK to lipid rafts. CSK maintains LCK and FYN in an inactive form. Promotes CD28-induced phosphorylation of VAV1. In mast cells, phosphorylates CLNK after activation of immunoglobulin epsilon receptor signaling. Can also promote CD244-mediated NK cell activation. The protein is Tyrosine-protein kinase Fyn of Sus scrofa (Pig).